A 157-amino-acid polypeptide reads, in one-letter code: Nuclear cap-binding protein subunit 2 (157 aa).

MRNA is bound by residues Tyr17, Tyr40, Arg109 to Asp113, Arg120 to Arg124, and Gln130 to Val131. Positions Cys37 to Gly115 constitute an RRM domain.

The protein belongs to the RRM NCBP2 family. As to quaternary structure, component of the nuclear cap-binding complex (CBC), a heterodimer composed of ncbp-1 and ncbp-2 that interacts with m7GpppG-capped RNA.

It localises to the nucleus. Component of the cap-binding complex (CBC), which binds co-transcriptionally to the 5' cap of pre-mRNAs and is involved in various processes such as pre-mRNA splicing and RNA-mediated gene silencing (RNAi). The CBC complex is involved in miRNA-mediated RNA interference and is required for primary microRNAs (miRNAs) processing. In the CBC complex, ncbp-2 recognizes and binds capped RNAs (m7GpppG-capped RNA) but requires ncbp-1 to stabilize the movement of its N-terminal loop and lock the CBC into a high affinity cap-binding state with the cap structure. The protein is Nuclear cap-binding protein subunit 2 (ncbp-2) of Caenorhabditis briggsae.